Here is a 328-residue protein sequence, read N- to C-terminus: Ferredoxin--NADP reductase 2 (328 aa).

Positions 37, 45, 50, 90, 124, 285, and 325 each coordinate FAD.

It belongs to the ferredoxin--NADP reductase type 2 family. In terms of assembly, homodimer. FAD serves as cofactor.

The catalysed reaction is 2 reduced [2Fe-2S]-[ferredoxin] + NADP(+) + H(+) = 2 oxidized [2Fe-2S]-[ferredoxin] + NADPH. This is Ferredoxin--NADP reductase 2 from Latilactobacillus sakei subsp. sakei (strain 23K) (Lactobacillus sakei subsp. sakei).